The chain runs to 233 residues: ATP synthase subunit a, chloroplastic (233 aa).

4 consecutive transmembrane segments (helical) span residues 82-102 (VPFIGTLFLFIFVSNWSGALI), 121-141 (INTTAALALLTSLAYFYAGIS), 177-199 (LFGNILADELVVSVLTLLVPLIV), and 211-231 (SSIQALIFATLAAAYIGEAIE).

This sequence belongs to the ATPase A chain family. F-type ATPases have 2 components, CF(1) - the catalytic core - and CF(0) - the membrane proton channel. CF(1) has five subunits: alpha(3), beta(3), gamma(1), delta(1), epsilon(1). CF(0) has four main subunits: a, b, b' and c.

It localises to the plastid. The protein localises to the chloroplast thylakoid membrane. Key component of the proton channel; it plays a direct role in the translocation of protons across the membrane. This is ATP synthase subunit a, chloroplastic from Galdieria sulphuraria (Red alga).